The sequence spans 558 residues: Factor VII-activating protease (558 aa).

An N-terminal signal peptide occupies residues 1–23 (MFARMSDLHVLLLMVLAGKTAFG). N54 carries N-linked (GlcNAc...) asparagine glycosylation. 3 EGF-like domains span residues 71 to 107 (EDDP…NRCQ), 109 to 146 (VQNK…SDCS), and 148 to 186 (VVPV…KLCE). 18 disulfides stabilise this stretch: C75/C86, C80/C95, C97/C106, C113/C123, C118/C134, C136/C145, C152/C163, C157/C174, C176/C185, C192/C274, C213/C255, C244/C269, C299/C433, C345/C361, C353/C422, C445/C513, C475/C491, and C503/C531. Residues 191-274 (DCYVDDGYSY…KWEYCDVPAC (84 aa)) form the Kringle domain. The region spanning 312–553 (IFGGFKSTAG…FLTWIKATME (242 aa)) is the Peptidase S1 domain. Catalysis depends on charge relay system residues H360 and D409. The active-site Charge relay system is the S507.

It belongs to the peptidase S1 family. Heterodimer; disulfide-linked. Heterodimer of a 50 kDa heavy and a 27 kDa light chain linked by a disulfide bond. Post-translationally, proteolytic cleavage at Gly-23 or Leu-27 can give rise to the 50 kDa heavy chain (HC) and cleavage at Arg-311 or Lys-317 can give rise to the 27 kDa light chain (LC). The HC can undergo further proteolytic cleavage giving rise to a 26 kDa fragment. The LC can undergo further proteolytic cleavage at Arg-311 leading to a 17-kDa fragment and at Arg-478 leading to a 8-kDa fragment.

The protein resides in the secreted. Cleaves the alpha-chain at multiple sites and the beta-chain between 'Lys-53' and 'Lys-54' but not the gamma-chain of fibrinogen and therefore does not initiate the formation of the fibrin clot and does not cause the fibrinolysis directly. It does not cleave (activate) prothrombin and plasminogen but converts the inactive single chain urinary plasminogen activator (pro-urokinase) to the active two chain form. Activates coagulation factor VII. May function as a tumor suppressor negatively regulating cell proliferation and cell migration. The polypeptide is Factor VII-activating protease (HABP2) (Bos taurus (Bovine)).